A 139-amino-acid polypeptide reads, in one-letter code: Putative nickel-responsive regulator (139 aa).

Positions 79, 90, 92, and 98 each coordinate Ni(2+).

The protein belongs to the transcriptional regulatory CopG/NikR family. Ni(2+) serves as cofactor.

Functionally, transcriptional regulator. This Geobacter sulfurreducens (strain ATCC 51573 / DSM 12127 / PCA) protein is Putative nickel-responsive regulator.